The chain runs to 572 residues: Golgi apyrase (572 aa).

Residues 1–470 (MVRKYGIFID…KHWMRLFPNK (470 aa)) lie on the Lumenal side of the membrane. The Proton acceptor role is filled by Glu145. The chain crosses the membrane as a helical span at residues 471-491 (LFFILSFIFCLFFLFSLVLFG). The Cytoplasmic segment spans residues 492 to 572 (YDPKRRQRFK…RERTPRSPFP (81 aa)).

Belongs to the GDA1/CD39 NTPase family. Ca(2+) is required as a cofactor. Requires Mg(2+) as cofactor. It depends on Mn(2+) as a cofactor.

Its subcellular location is the golgi apparatus. It is found in the membrane. It carries out the reaction a ribonucleoside 5'-triphosphate + 2 H2O = a ribonucleoside 5'-phosphate + 2 phosphate + 2 H(+). It participates in protein modification; protein glycosylation. Functionally, catalyzes the hydrolysis of phosphoanhydride bonds of nucleoside tri- and di-phosphates. Required for Golgi glycosylation and cell wall integrity. Involved in N-mannosylation of proteins in Golgi. In Schizosaccharomyces pombe (strain 972 / ATCC 24843) (Fission yeast), this protein is Golgi apyrase.